The chain runs to 150 residues: Avidin-related protein 2 (150 aa).

A signal peptide spans 1–24 (MVHATSPLLLLLLLSLALVAPSLS). The region spanning 26-147 (RKCSLTGEWD…GNNDFTRQHT (122 aa)) is the Avidin-like domain. Cysteine 28 and cysteine 105 are oxidised to a cystine. Biotin contacts are provided by asparagine 36, serine 40, tyrosine 57, threonine 59, and aspartate 63. N-linked (GlcNAc...) asparagine glycans are attached at residues asparagine 67 and asparagine 93. Biotin is bound by residues serine 95, serine 99, and asparagine 140.

Homotetramer. In terms of processing, glycosylated.

Its subcellular location is the secreted. Forms a strong non-covalent specific complex with biotin. This chain is Avidin-related protein 2 (AVR2), found in Gallus gallus (Chicken).